We begin with the raw amino-acid sequence, 333 residues long: Fructose-1,6-bisphosphatase class 1 1 (333 aa).

Glu81, Asp100, Leu102, and Asp103 together coordinate Mg(2+). Residues 103–106 and Asn191 each bind substrate; that span reads DGSS. Glu263 serves as a coordination point for Mg(2+).

It belongs to the FBPase class 1 family. In terms of assembly, homotetramer. Mg(2+) serves as cofactor.

It is found in the cytoplasm. The enzyme catalyses beta-D-fructose 1,6-bisphosphate + H2O = beta-D-fructose 6-phosphate + phosphate. It participates in carbohydrate biosynthesis; gluconeogenesis. With respect to regulation, fructose-1,6-bisphosphatase II is not light-activated. This is Fructose-1,6-bisphosphatase class 1 1 from Cereibacter sphaeroides (Rhodobacter sphaeroides).